The sequence spans 324 residues: Putative exosome complex exonuclease RRP42 (324 aa).

It belongs to the RNase PH family. As to quaternary structure, component of the RNA exosome complex.

Its subcellular location is the nucleus. It localises to the nucleolus. It is found in the cytoplasm. Non-catalytic component of the RNA exosome complex which has 3'-&gt;5' exoribonuclease activity and participates in a multitude of cellular RNA processing and degradation events. This is Putative exosome complex exonuclease RRP42 (exosc7) from Dictyostelium discoideum (Social amoeba).